Consider the following 719-residue polypeptide: Calpain-12 (719 aa).

The region spanning 45 to 341 is the Calpain catalytic domain; sequence LFRDPYFPAG…FDTVQICSLS (297 aa). Active-site residues include Cys105, His259, and Asn283. The tract at residues 342–540 is domain III; sequence PEVLGPSPEG…DDVISADLQS (199 aa). Residues 393-402 are compositionally biased toward acidic residues; that stretch reads DEEDDEDEEG. The disordered stretch occupies residues 393–418; sequence DEEDDEDEEGPWGGWGAAGARGPARG. Residues 541 to 719 are domain IV; sequence LQGPYLPLEL…RQWMEVATFS (179 aa). Residues 620 to 655 enclose the EF-hand domain; it reads GYLLEWQAIFNKFDEDTSGTMNSYELRLALNAAGFH. Asp633, Asp635, Ser637, Thr639, and Glu644 together coordinate Ca(2+).

It belongs to the peptidase C2 family.

In terms of biological role, calcium-regulated non-lysosomal thiol-protease. The protein is Calpain-12 (CAPN12) of Homo sapiens (Human).